The following is a 227-amino-acid chain: Cytochrome c oxidase subunit 2 (227 aa).

Topologically, residues 1–14 (MPYPLQLGFQDATS) are mitochondrial intermembrane. The helical transmembrane segment at 15–45 (PIMEELLHFHDHTLMIVFLISSLVLYIITLM) threads the bilayer. At 46-59 (LTTKLTHTSTMDAQ) the chain is on the mitochondrial matrix side. Residues 60 to 87 (EVETVWTILPAVILILIALPSLRILYMM) form a helical membrane-spanning segment. Residues 88–227 (DEINNPLLTI…HFEDWSTSML (140 aa)) are Mitochondrial intermembrane-facing. Cu cation contacts are provided by H161, C196, E198, C200, H204, and M207. E198 is a Mg(2+) binding site.

It belongs to the cytochrome c oxidase subunit 2 family. In terms of assembly, component of the cytochrome c oxidase (complex IV, CIV), a multisubunit enzyme composed of 14 subunits. The complex is composed of a catalytic core of 3 subunits MT-CO1, MT-CO2 and MT-CO3, encoded in the mitochondrial DNA, and 11 supernumerary subunits COX4I, COX5A, COX5B, COX6A, COX6B, COX6C, COX7A, COX7B, COX7C, COX8 and NDUFA4, which are encoded in the nuclear genome. The complex exists as a monomer or a dimer and forms supercomplexes (SCs) in the inner mitochondrial membrane with NADH-ubiquinone oxidoreductase (complex I, CI) and ubiquinol-cytochrome c oxidoreductase (cytochrome b-c1 complex, complex III, CIII), resulting in different assemblies (supercomplex SCI(1)III(2)IV(1) and megacomplex MCI(2)III(2)IV(2)). Found in a complex with TMEM177, COA6, COX18, COX20, SCO1 and SCO2. Interacts with TMEM177 in a COX20-dependent manner. Interacts with COX20. Interacts with COX16. Requires Cu cation as cofactor.

Its subcellular location is the mitochondrion inner membrane. The catalysed reaction is 4 Fe(II)-[cytochrome c] + O2 + 8 H(+)(in) = 4 Fe(III)-[cytochrome c] + 2 H2O + 4 H(+)(out). Functionally, component of the cytochrome c oxidase, the last enzyme in the mitochondrial electron transport chain which drives oxidative phosphorylation. The respiratory chain contains 3 multisubunit complexes succinate dehydrogenase (complex II, CII), ubiquinol-cytochrome c oxidoreductase (cytochrome b-c1 complex, complex III, CIII) and cytochrome c oxidase (complex IV, CIV), that cooperate to transfer electrons derived from NADH and succinate to molecular oxygen, creating an electrochemical gradient over the inner membrane that drives transmembrane transport and the ATP synthase. Cytochrome c oxidase is the component of the respiratory chain that catalyzes the reduction of oxygen to water. Electrons originating from reduced cytochrome c in the intermembrane space (IMS) are transferred via the dinuclear copper A center (CU(A)) of subunit 2 and heme A of subunit 1 to the active site in subunit 1, a binuclear center (BNC) formed by heme A3 and copper B (CU(B)). The BNC reduces molecular oxygen to 2 water molecules using 4 electrons from cytochrome c in the IMS and 4 protons from the mitochondrial matrix. This chain is Cytochrome c oxidase subunit 2 (MT-CO2), found in Dasypus novemcinctus (Nine-banded armadillo).